The chain runs to 237 residues: MSKFPDLPGMKNLDANPYEPELASFDDMDADAGDGDAVAKTGTTTIGITTDGGVVIATDMRASLGGRFVSNKSVQKVEQIHPSAALTLVGSVGGAQSFIRTLRSESDLYEVRRGEPMSISALATLAGNFARGGPFFAINPILGGVDEEGSHVYSIDPAGGVMEDDYTVTGSGMQVAHGKLEDRYHDDLSMEEAEELAVEAVYAATERDTGSGNGVYVATVTGDGVDITGYDDFEGAR.

Positions 1–27 (MSKFPDLPGMKNLDANPYEPELASFDD) are disordered. A propeptide spans 1 to 42 (MSKFPDLPGMKNLDANPYEPELASFDDMDADAGDGDAVAKTG) (removed in mature form; by autocatalysis). The active-site Nucleophile is Thr43.

The protein belongs to the peptidase T1B family. The 20S proteasome core is composed of 14 alpha and 14 beta subunits that assemble into four stacked heptameric rings, resulting in a barrel-shaped structure. The two inner rings, each composed of seven catalytic beta subunits, are sandwiched by two outer rings, each composed of seven alpha subunits. The catalytic chamber with the active sites is on the inside of the barrel. Has a gated structure, the ends of the cylinder being occluded by the N-termini of the alpha-subunits. Is capped at one or both ends by the proteasome regulatory ATPase, PAN.

The protein localises to the cytoplasm. It catalyses the reaction Cleavage of peptide bonds with very broad specificity.. The formation of the proteasomal ATPase PAN-20S proteasome complex, via the docking of the C-termini of PAN into the intersubunit pockets in the alpha-rings, triggers opening of the gate for substrate entry. Interconversion between the open-gate and close-gate conformations leads to a dynamic regulation of the 20S proteasome proteolysis activity. In terms of biological role, component of the proteasome core, a large protease complex with broad specificity involved in protein degradation. The protein is Proteasome subunit beta of Halomicrobium mukohataei (strain ATCC 700874 / DSM 12286 / JCM 9738 / NCIMB 13541) (Haloarcula mukohataei).